We begin with the raw amino-acid sequence, 232 residues long: Octanoyltransferase (232 aa).

The BPL/LPL catalytic domain occupies Gly-40 to Pro-226. Substrate contacts are provided by residues Arg-79 to His-86, Ala-157 to Gly-159, and Gly-170 to Ala-172. Residue Cys-188 is the Acyl-thioester intermediate of the active site.

It belongs to the LipB family.

It localises to the cytoplasm. The enzyme catalyses octanoyl-[ACP] + L-lysyl-[protein] = N(6)-octanoyl-L-lysyl-[protein] + holo-[ACP] + H(+). Its pathway is protein modification; protein lipoylation via endogenous pathway; protein N(6)-(lipoyl)lysine from octanoyl-[acyl-carrier-protein]: step 1/2. Its function is as follows. Catalyzes the transfer of endogenously produced octanoic acid from octanoyl-acyl-carrier-protein onto the lipoyl domains of lipoate-dependent enzymes. Lipoyl-ACP can also act as a substrate although octanoyl-ACP is likely to be the physiological substrate. The chain is Octanoyltransferase from Gluconacetobacter diazotrophicus (strain ATCC 49037 / DSM 5601 / CCUG 37298 / CIP 103539 / LMG 7603 / PAl5).